The primary structure comprises 299 residues: MTFKSGFVAILGRPNVGKSTFLNHVMGQKIAIMSDKAQTTRNKIMGIYTTDKEQIVFIDTPGIHKPKTALGDFMVESAYSTLREVDTVLFMVPADEARGKGDDMIIERLKAAKVPVILVVNKIDKVHPDQLLSQIDDFRNQMDFKEIVPISALQGNNVSRLVDILSENLDEGFQYFPSDQITDHPERFLVSEMVREKVLHLTREEIPHSVAVVVDSMKRDEETDKVHIRATIMVERDSQKGIIIGKGGAMLKKIGSMARRDIELMLGDKVFLETWVKVKKNWRDKKLDLADFGYNEREY.

In terms of domain architecture, Era-type G spans 4–171; sequence KSGFVAILGR…VDILSENLDE (168 aa). The tract at residues 12 to 19 is G1; sequence GRPNVGKS. 12–19 is a GTP binding site; the sequence is GRPNVGKS. The G2 stretch occupies residues 38-42; the sequence is QTTRN. The segment at 59–62 is G3; that stretch reads DTPG. Residues 59–63 and 121–124 each bind GTP; these read DTPGI and NKID. The G4 stretch occupies residues 121–124; the sequence is NKID. Residues 150-152 form a G5 region; it reads ISA. The region spanning 202–280 is the KH type-2 domain; that stretch reads TREEIPHSVA…FLETWVKVKK (79 aa).

The protein belongs to the TRAFAC class TrmE-Era-EngA-EngB-Septin-like GTPase superfamily. Era GTPase family. Monomer.

The protein resides in the cytoplasm. It localises to the cell membrane. In terms of biological role, an essential GTPase that binds both GDP and GTP, with rapid nucleotide exchange. Plays a role in 16S rRNA processing and 30S ribosomal subunit biogenesis and possibly also in cell cycle regulation and energy metabolism. The protein is GTPase Era of Streptococcus pneumoniae (strain P1031).